Consider the following 344-residue polypeptide: MIKVGIVGGTGYTGVELLRLLAQHPQAEVAVITSRSEAGLRVDEMYPNLRGHYPELAFSVPDVATLGACDVVFFATPHGVAHALAGELLAAGTRVIDLSADFRLQDAEEWAKWYGQPHGAPELLSEAVYGLPEVNREAIKTARLIAVPGCYPTATQLGLIPLLEAGLADAGSLIADCKSGVSGAGRGASVGSLFCEAGESMKAYSVKGHRHLPEIRQGLRLAAGGDVGLTFVPHLTPMIRGIHATLYARVTDTSVDLQALFEQRYANEPFVDVMPAGSHPETRSVRGGNVCRIAVHRPQGGDLVVVLSVIDNLVKGASGQAVQNMNILFGLDERLGLSHAALLP.

The active site involves C150.

This sequence belongs to the NAGSA dehydrogenase family. Type 1 subfamily.

It is found in the cytoplasm. It catalyses the reaction N-acetyl-L-glutamate 5-semialdehyde + phosphate + NADP(+) = N-acetyl-L-glutamyl 5-phosphate + NADPH + H(+). It functions in the pathway amino-acid biosynthesis; L-arginine biosynthesis; N(2)-acetyl-L-ornithine from L-glutamate: step 3/4. In terms of biological role, catalyzes the NADPH-dependent reduction of N-acetyl-5-glutamyl phosphate to yield N-acetyl-L-glutamate 5-semialdehyde. The protein is N-acetyl-gamma-glutamyl-phosphate reductase of Ectopseudomonas mendocina (strain ymp) (Pseudomonas mendocina).